The primary structure comprises 874 residues: Alanine--tRNA ligase (874 aa).

Positions 562, 566, 665, and 669 each coordinate Zn(2+).

It belongs to the class-II aminoacyl-tRNA synthetase family. Zn(2+) is required as a cofactor.

It localises to the cytoplasm. It catalyses the reaction tRNA(Ala) + L-alanine + ATP = L-alanyl-tRNA(Ala) + AMP + diphosphate. Its function is as follows. Catalyzes the attachment of alanine to tRNA(Ala) in a two-step reaction: alanine is first activated by ATP to form Ala-AMP and then transferred to the acceptor end of tRNA(Ala). Also edits incorrectly charged Ser-tRNA(Ala) and Gly-tRNA(Ala) via its editing domain. The chain is Alanine--tRNA ligase from Stutzerimonas stutzeri (strain A1501) (Pseudomonas stutzeri).